Reading from the N-terminus, the 920-residue chain is Rho guanine nucleotide exchange factor 1 (920 aa).

An RGSL domain is found at 39 to 230; it reads DQNSQFQSLE…SLYMRHLGVR (192 aa). Positions 231 to 404 are disordered; that stretch reads TKSGDKKSGR…PGWRELVPPD (174 aa). Positions 281–311 are enriched in basic and acidic residues; that stretch reads DCRHLKVEADAEKPGPADRKGGLGMSSRDRT. Residues 364 to 380 are compositionally biased toward acidic residues; sequence STEDNGETESPEPGDDG. A phosphoserine mark is found at Ser-373, Gly-386, Glu-390, Ser-408, and Ser-412. The DH domain maps to 415–604; sequence KRQEVISELL…REILHHVNQA (190 aa). 2 positions are modified to phosphothreonine: Arg-432 and Thr-694. The PH domain occupies 646 to 759; the sequence is KLVHEGPLTW…WCNLITETAG (114 aa). Residue Tyr-737 is modified to Phosphotyrosine; by JAK2. 2 disordered regions span residues 764–797 and 840–864; these read PAPA…AEMA and TEED…PGPV. A coiled-coil region spans residues 865–894; that stretch reads HTQEIEENLLSLEVAIRQLEELEEEFCRLR. At Ser-905 the chain carries Phosphoserine.

As to quaternary structure, interacts with RHOA, GNA12 and GNA13. Homooligomerizes through the coiled coil region. Interacts with CTNNAL1. May interact with CCPG1. Phosphorylated by PKCA. Angiotensin-2 induced Tyr-737 phosphorylation is mediated by JAK2. Isoform 5 is phosphorylated at 'Ser-390'. As to expression, ubiquitously expressed.

It localises to the cytoplasm. Its subcellular location is the membrane. In terms of biological role, seems to play a role in the regulation of RhoA GTPase by guanine nucleotide-binding alpha-12 (GNA12) and alpha-13 (GNA13) subunits. Acts as a GTPase-activating protein (GAP) for GNA12 and GNA13, and as guanine nucleotide exchange factor (GEF) for RhoA GTPase. Activated G alpha 13/GNA13 stimulates the RhoGEF activity through interaction with the RGS-like domain. This GEF activity is inhibited by binding to activated GNA12. Mediates angiotensin-2-induced RhoA activation. Isoform 3 and isoform 4 do not homooligomerize and show an enhanced RhoGEF activity. In lymphoid follicles, may trigger activation of GNA13 as part of S1PR2-dependent signaling pathway that leads to inhibition of germinal center (GC) B cell growth and migration outside the GC niche. The protein is Rho guanine nucleotide exchange factor 1 (Arhgef1) of Mus musculus (Mouse).